The chain runs to 476 residues: Glutamyl-tRNA(Gln) amidotransferase subunit A (476 aa).

Residues Lys-77 and Ser-152 each act as charge relay system in the active site. The active-site Acyl-ester intermediate is the Ser-176.

This sequence belongs to the amidase family. GatA subfamily. Heterotrimer of A, B and C subunits.

The enzyme catalyses L-glutamyl-tRNA(Gln) + L-glutamine + ATP + H2O = L-glutaminyl-tRNA(Gln) + L-glutamate + ADP + phosphate + H(+). Its function is as follows. Allows the formation of correctly charged Gln-tRNA(Gln) through the transamidation of misacylated Glu-tRNA(Gln) in organisms which lack glutaminyl-tRNA synthetase. The reaction takes place in the presence of glutamine and ATP through an activated gamma-phospho-Glu-tRNA(Gln). This Acidobacterium capsulatum (strain ATCC 51196 / DSM 11244 / BCRC 80197 / JCM 7670 / NBRC 15755 / NCIMB 13165 / 161) protein is Glutamyl-tRNA(Gln) amidotransferase subunit A.